The sequence spans 358 residues: UDP-N-acetylglucosamine--N-acetylmuramyl-(pentapeptide) pyrophosphoryl-undecaprenol N-acetylglucosamine transferase (358 aa).

Residues 11 to 13, N120, R161, S188, and Q282 each bind UDP-N-acetyl-alpha-D-glucosamine; that span reads TGG.

It belongs to the glycosyltransferase 28 family. MurG subfamily.

The protein resides in the cell inner membrane. The catalysed reaction is di-trans,octa-cis-undecaprenyl diphospho-N-acetyl-alpha-D-muramoyl-L-alanyl-D-glutamyl-meso-2,6-diaminopimeloyl-D-alanyl-D-alanine + UDP-N-acetyl-alpha-D-glucosamine = di-trans,octa-cis-undecaprenyl diphospho-[N-acetyl-alpha-D-glucosaminyl-(1-&gt;4)]-N-acetyl-alpha-D-muramoyl-L-alanyl-D-glutamyl-meso-2,6-diaminopimeloyl-D-alanyl-D-alanine + UDP + H(+). It functions in the pathway cell wall biogenesis; peptidoglycan biosynthesis. Cell wall formation. Catalyzes the transfer of a GlcNAc subunit on undecaprenyl-pyrophosphoryl-MurNAc-pentapeptide (lipid intermediate I) to form undecaprenyl-pyrophosphoryl-MurNAc-(pentapeptide)GlcNAc (lipid intermediate II). The protein is UDP-N-acetylglucosamine--N-acetylmuramyl-(pentapeptide) pyrophosphoryl-undecaprenol N-acetylglucosamine transferase of Parasynechococcus marenigrum (strain WH8102).